The sequence spans 428 residues: Growth/differentiation factor 2 (428 aa).

The N-terminal stretch at 1–22 (MSPGAFRVALLPLFLLVCVTQQ) is a signal peptide. Residues 23 to 318 (KPLQNWEQAS…VGPLLARRKR (296 aa)) constitute a propeptide that is removed on maturation. Residues N70 and N135 are each glycosylated (N-linked (GlcNAc...) asparagine). C155 and C236 are disulfide-bonded. Residue N262 is glycosylated (N-linked (GlcNAc...) asparagine). Cystine bridges form between C326–C392, C355–C425, and C359–C427. Residues 401 to 415 (SILYKDDMGVPTLKY) form an interaction with ENG region.

Belongs to the TGF-beta family. In terms of assembly, homodimer; disulfide-linked. Detected in extracellular fluid as mature homodimer, and in complex with its propeptide. Interacts with ACVRL1, BMPR2 and ACVR2B with high affinity (in vitro). Identified in a complex with ACVRL1 and ACVR2B. Has ten times lower affinity for ACVR2A (in vitro). Interacts with ENG, forming a heterotetramer with a 2:2 stoichiometry. Can form a heteromeric complex with ENG and ACVRL1. Interacts with type I receptor ACVR1. In terms of processing, a reversible disulfide bond can be formed between the two subunits in the homodimer; this has no effect on GDF2 activity.

The protein localises to the secreted. In terms of biological role, potent circulating inhibitor of angiogenesis. Signals through the type I activin receptor ACVRL1 but not other Alks. Signaling through SMAD1 in endothelial cells requires TGF-beta coreceptor endoglin/ENG. This chain is Growth/differentiation factor 2 (Gdf2), found in Mus musculus (Mouse).